The chain runs to 120 residues: Small ribosomal subunit protein uS13 (120 aa).

Residues 93–120 are disordered; sequence RRGLPCRGQKTKTNARTRKGKRKTVGAA.

The protein belongs to the universal ribosomal protein uS13 family. As to quaternary structure, part of the 30S ribosomal subunit. Forms a loose heterodimer with protein S19. Forms two bridges to the 50S subunit in the 70S ribosome.

Functionally, located at the top of the head of the 30S subunit, it contacts several helices of the 16S rRNA. In the 70S ribosome it contacts the 23S rRNA (bridge B1a) and protein L5 of the 50S subunit (bridge B1b), connecting the 2 subunits; these bridges are implicated in subunit movement. Contacts the tRNAs in the A and P-sites. The sequence is that of Small ribosomal subunit protein uS13 from Sulfurimonas denitrificans (strain ATCC 33889 / DSM 1251) (Thiomicrospira denitrificans (strain ATCC 33889 / DSM 1251)).